We begin with the raw amino-acid sequence, 322 residues long: Sideroflexin-1 (322 aa).

The residue at position 2 (S2) is an N-acetylserine. Residues 2 to 102 are Mitochondrial matrix-facing; that stretch reads SGEVPPNINI…MSAQVPMNMT (101 aa). Residues 103–120 form a helical membrane-spanning segment; the sequence is ITGCMMTFYRTTPAVLFW. At 121–146 the chain is on the mitochondrial intermembrane side; it reads QWINQSFNAVVNYTNRSGDAPLTVNE. The chain crosses the membrane as a helical span at residues 147 to 167; sequence LGTAYVSATTGAVATALGLNA. The Mitochondrial matrix segment spans residues 168–174; that stretch reads LTKHVSP. A helical transmembrane segment spans residues 175-195; the sequence is LIGRFVPFAAVAAANCINIPL. Residues 196–228 lie on the Mitochondrial intermembrane side of the membrane; the sequence is MRQRELKVGIPVTDENGTRLGESTNAAKQAITQ. The chain crosses the membrane as a helical span at residues 229–249; it reads VVISRILMAAPGMAIPPFIMN. At 250–266 the chain is on the mitochondrial matrix side; the sequence is TLEKKAFLKRFPWMSAP. The helical transmembrane segment at 267–287 threads the bilayer; it reads IQVTLVGFCLVFATPLCCALF. At 288–322 the chain is on the mitochondrial intermembrane side; sequence PQKSSMSVTSLEDDLQASIQKSHPELRRVYFNKGL.

Belongs to the sideroflexin family.

The protein localises to the mitochondrion inner membrane. The enzyme catalyses L-serine(in) = L-serine(out). It carries out the reaction L-alanine(in) = L-alanine(out). The catalysed reaction is L-cysteine(in) = L-cysteine(out). In terms of biological role, amino acid transporter importing serine, an essential substrate of the mitochondrial branch of the one-carbon pathway, into mitochondria. Mitochondrial serine is then converted to glycine and formate, which exits to the cytosol where it is used to generate the charged folates that serve as one-carbon donors. May also transport other amino acids including alanine and cysteine. This chain is Sideroflexin-1 (Sfxn1), found in Rattus norvegicus (Rat).